Consider the following 54-residue polypeptide: Preprotein translocase subunit SecG (54 aa).

Over 1–31 the chain is Cytoplasmic; it reads MSSGSNSGGLMSSAGLVRYFDSEDRDAIAID. The helical transmembrane segment at 32 to 53 threads the bilayer; that stretch reads PKTVLAFCVLFGVFVQILSLTV. Alanine 54 is a topological domain (extracellular).

It belongs to the SEC61-beta family. As to quaternary structure, component of the protein translocase complex. Heterotrimer consisting of alpha (SecY), beta (SecG) and gamma (SecE) subunits. Can form oligomers of the heterotrimer.

It localises to the cell membrane. Involved in protein export. The function of the beta subunit is unknown, but it may be involved in stabilization of the trimeric complex. The protein is Preprotein translocase subunit SecG of Halorubrum lacusprofundi (strain ATCC 49239 / DSM 5036 / JCM 8891 / ACAM 34).